The chain runs to 322 residues: Myeloid-associated differentiation marker (322 aa).

The segment at 1–25 (MPVTVTRTTITTTTTSSSGQGSPTI) is disordered. Ser-22 is modified (phosphoserine). MARVEL domains lie at 31–163 (ALTQ…ARPG) and 168–319 (YMAT…HLVF). 8 helical membrane-spanning segments follow: residues 41–61 (LLQL…GAWT), 70–90 (FTWC…LCGL), 101–121 (FPIT…IIYP), 137–157 (AIAA…EVAW), 171–191 (TVPG…FAFI), 203–223 (LEWC…AILL), 239–259 (FLSG…VLWP), and 294–314 (LAVA…LVHS).

It belongs to the MAL family.

The protein resides in the membrane. The sequence is that of Myeloid-associated differentiation marker (MYADM) from Pongo abelii (Sumatran orangutan).